The primary structure comprises 315 residues: MSFAAHTKKELTMMEGADCCSKAELSALIRMNGSLQFGAGRLVLDVTTENAAIARRIYTLIKRLFQIHAELLVRKKMRLKKNNVYIVRIPNKANEILQDLGIMDQSLSFIPGIAPEIVKKSCCRAAYLRGAFLAGGSVNHPEASSYHLEIFTSYQDFCEALTKIANRYKLNAKCIERKKGYVLYIKEGEKITEFLSLIGAHQALLYFEDVRIVKDMRNSVNRLHNCEIANINKTVNAATRQMENIQLIDQEMGLENLPKRLREVAELRVAHPDINLKELGEMVPSGVVSKSGINHRLRKINEIADKIREKQNISM.

Residues 275–309 (NLKELGEMVPSGVVSKSGINHRLRKINEIADKIRE) constitute a DNA-binding region (H-T-H motif).

Belongs to the WhiA family.

Involved in cell division and chromosome segregation. The sequence is that of Probable cell division protein WhiA from Brevibacillus brevis (strain 47 / JCM 6285 / NBRC 100599).